Consider the following 408-residue polypeptide: NADH-quinone oxidoreductase subunit D (408 aa).

It belongs to the complex I 49 kDa subunit family. As to quaternary structure, NDH-1 is composed of 14 different subunits. Subunits NuoB, C, D, E, F, and G constitute the peripheral sector of the complex.

Its subcellular location is the cell inner membrane. The enzyme catalyses a quinone + NADH + 5 H(+)(in) = a quinol + NAD(+) + 4 H(+)(out). Its function is as follows. NDH-1 shuttles electrons from NADH, via FMN and iron-sulfur (Fe-S) centers, to quinones in the respiratory chain. The immediate electron acceptor for the enzyme in this species is believed to be ubiquinone. Couples the redox reaction to proton translocation (for every two electrons transferred, four hydrogen ions are translocated across the cytoplasmic membrane), and thus conserves the redox energy in a proton gradient. This chain is NADH-quinone oxidoreductase subunit D, found in Campylobacter jejuni subsp. doylei (strain ATCC BAA-1458 / RM4099 / 269.97).